Reading from the N-terminus, the 142-residue chain is Hemoglobin subunit alpha-A (142 aa).

The Globin domain maps to 2–142 (VLSANDKTNV…VGNVLTAKYR (141 aa)). H59 is an O2 binding site. H88 lines the heme b pocket.

Belongs to the globin family. As to quaternary structure, heterotetramer of two alpha chains and two beta chains. In terms of tissue distribution, red blood cells.

Its function is as follows. Involved in oxygen transport from the lung to the various peripheral tissues. The sequence is that of Hemoglobin subunit alpha-A (HBAA) from Accipiter gentilis (Northern goshawk).